Reading from the N-terminus, the 96-residue chain is Co-chaperonin GroES (96 aa).

The protein belongs to the GroES chaperonin family. Heptamer of 7 subunits arranged in a ring. Interacts with the chaperonin GroEL.

The protein localises to the cytoplasm. Together with the chaperonin GroEL, plays an essential role in assisting protein folding. The GroEL-GroES system forms a nano-cage that allows encapsulation of the non-native substrate proteins and provides a physical environment optimized to promote and accelerate protein folding. GroES binds to the apical surface of the GroEL ring, thereby capping the opening of the GroEL channel. The sequence is that of Co-chaperonin GroES from Wolbachia sp. subsp. Brugia malayi (strain TRS).